Here is a 570-residue protein sequence, read N- to C-terminus: Endo-1,4-beta-xylanase 5-like (570 aa).

The first 23 residues, 1-23 (MNSIKNGFFLCMIFLLWCHVDSG), serve as a signal peptide directing secretion. Asn-197, Asn-261, and Asn-307 each carry an N-linked (GlcNAc...) asparagine glycan. Residues 202-501 (KGVVISLKQT…TQTGDVIDKL (300 aa)) enclose the GH10 domain. Glu-332 functions as the Proton donor in the catalytic mechanism. The N-linked (GlcNAc...) asparagine glycan is linked to Asn-346. Glu-439 acts as the Nucleophile in catalysis. 4 N-linked (GlcNAc...) asparagine glycosylation sites follow: Asn-490, Asn-515, Asn-537, and Asn-545.

Belongs to the glycosyl hydrolase 10 (cellulase F) family.

It carries out the reaction Endohydrolysis of (1-&gt;4)-beta-D-xylosidic linkages in xylans.. It functions in the pathway glycan degradation; xylan degradation. Binds to and hydrolyzes insoluble and soluble xylan substrates. This Arabidopsis thaliana (Mouse-ear cress) protein is Endo-1,4-beta-xylanase 5-like.